A 609-amino-acid chain; its full sequence is UvrABC system protein C (609 aa).

In terms of domain architecture, GIY-YIG spans 16 to 94 (SSAGVYRMYD…IKQYMPKYNV (79 aa)). Residues 203-238 (KQVISELVAKMEEAAEQQAYEQAARFRDQIMALRRV) enclose the UVR domain.

Belongs to the UvrC family. In terms of assembly, interacts with UvrB in an incision complex.

It is found in the cytoplasm. Functionally, the UvrABC repair system catalyzes the recognition and processing of DNA lesions. UvrC both incises the 5' and 3' sides of the lesion. The N-terminal half is responsible for the 3' incision and the C-terminal half is responsible for the 5' incision. The chain is UvrABC system protein C from Shewanella oneidensis (strain ATCC 700550 / JCM 31522 / CIP 106686 / LMG 19005 / NCIMB 14063 / MR-1).